The sequence spans 268 residues: MSLIYLVVLALVQGITEFLPISSSAHLILAPQVLGQADQGPLIDVMAHAGSLLAVLVYFRSDIVSVAMGKLALLQGRVTPGGRLALLVAASMPPIIIVAGALVAFDLVDALRSPRVIAIATLAFALPLWLADRYGRQTITIETMSFKHAALIGIAQLFALIPGASRSGVTMTAARGLGLTRTDSARFSMLMAIPVIAAFGLVSLIELVRADGMAAGASLSDGLIVAGLSFVTAWAAIAVLMRLVERIGFLPFALYRVGLGLALLVFFV.

8 helical membrane passes run 1-21, 39-59, 85-105, 110-130, 144-164, 187-207, 221-241, and 247-267; these read MSLI…FLPI, QGPL…LVYF, ALLV…LVAF, ALRS…PLWL, MSFK…IPGA, FSML…LIEL, DGLI…AVLM, and IGFL…LVFF.

It belongs to the UppP family.

The protein resides in the cell inner membrane. The catalysed reaction is di-trans,octa-cis-undecaprenyl diphosphate + H2O = di-trans,octa-cis-undecaprenyl phosphate + phosphate + H(+). Its function is as follows. Catalyzes the dephosphorylation of undecaprenyl diphosphate (UPP). Confers resistance to bacitracin. The protein is Undecaprenyl-diphosphatase of Maricaulis maris (strain MCS10) (Caulobacter maris).